The primary structure comprises 449 residues: MLNYIYNHSPIIFQNLMVSIKGKIFMKQRYTKHYYEEIKRLRECNDLFELQNQRFEEFYNYIKKNSEFYSEIIKKNNLSGKKITVANINQLPEITKDDIRKNVDKIITKKKNKLIKMGTGGSTGKSMVFYTNAYDMSRKIAYLDYFKEQHGVYKGMKRVSVGGRKIVPIKQKKKVFWRYNKPLNQLMISAYHADGENLKYYIKKLNKFQPETLDGYTTVIHRIARYILDNNIELSFTPIAIFPNAETLTDLMRDDIEKAFNCPVRNQYASSEGAPFITENKEGELEINVATGVFECKQIHGNIYELIVTGFYTTTTPLLRYKIGDSVELENELPVNYQQKDIKIKRIIGRNNDFLQSREKGIVTNVNLSTAIRFVENDVIESQFVQNDIDNIIVYLVISNDADKNNIIKKLKYELKFRFGTNTNFHFEFVNKIPSTPGGKKRFAINNIK.

The protein operates within capsule biogenesis; capsule polysaccharide biosynthesis. Its function is as follows. Required for the biosynthesis of type 1 capsular polysaccharide. In Staphylococcus aureus, this protein is Protein CapK (capK).